A 500-amino-acid chain; its full sequence is MEKFQRLDRSHYFLYPLIFQEYIYVLAHDHGLNGSILLENAGYDNKSSLLIVKRLIIRMYQQNHLILSVNDSKQTAFLGHNKNFYSQVMSEVSSTIMEIPLSLRLISSLERKGVVKSDNLRSIHSIFSFLEDNFSHLNYVLDILIPYPAHLEILVQALRYWIKDASSLHLLRFFLHECHNWDSLITSNSKKASSFFSKRNHRLFFFLYTSYVCEYESGFLFLRNQSSHLRSTSSGALIERIYFYGKIEHLAEVFARTFQANLWFFKDSFMHYVRYQGKSILASKGTFLLMNKRKDYFFNFWKSYFYLWSYPGRISINQLSNHSLDFLGYRSSVRLKPSMVRGQMLENTFLINNAIKKFDSIVPIMPLVGSLAKSKFCNALGHPIGKAIWADLSDSDIIERFGRIYRNLSHYHSGSSKKKSLYRVKYILRLSCARTLARKHKSTVRAFLKRFGSQLLEEFFTEEEQVFSLTFPRVSSISRRLSRRRIWYLDIVCINDLANH.

It belongs to the intron maturase 2 family. MatK subfamily.

The protein localises to the plastid. It localises to the chloroplast. Usually encoded in the trnK tRNA gene intron. Probably assists in splicing its own and other chloroplast group II introns. This chain is Maturase K, found in Helianthus annuus (Common sunflower).